Reading from the N-terminus, the 186-residue chain is ATP synthase subunit b, chloroplastic (186 aa).

A helical transmembrane segment spans residues 27–49 (LATNPINLSVVLGVLIFFGKGVL).

This sequence belongs to the ATPase B chain family. F-type ATPases have 2 components, F(1) - the catalytic core - and F(0) - the membrane proton channel. F(1) has five subunits: alpha(3), beta(3), gamma(1), delta(1), epsilon(1). F(0) has four main subunits: a(1), b(1), b'(1) and c(10-14). The alpha and beta chains form an alternating ring which encloses part of the gamma chain. F(1) is attached to F(0) by a central stalk formed by the gamma and epsilon chains, while a peripheral stalk is formed by the delta, b and b' chains.

The protein resides in the plastid. The protein localises to the chloroplast thylakoid membrane. In terms of biological role, f(1)F(0) ATP synthase produces ATP from ADP in the presence of a proton or sodium gradient. F-type ATPases consist of two structural domains, F(1) containing the extramembraneous catalytic core and F(0) containing the membrane proton channel, linked together by a central stalk and a peripheral stalk. During catalysis, ATP synthesis in the catalytic domain of F(1) is coupled via a rotary mechanism of the central stalk subunits to proton translocation. Functionally, component of the F(0) channel, it forms part of the peripheral stalk, linking F(1) to F(0). In Illicium oligandrum (Star anise), this protein is ATP synthase subunit b, chloroplastic.